The following is a 115-amino-acid chain: Large ribosomal subunit protein bL19 (115 aa).

The protein belongs to the bacterial ribosomal protein bL19 family.

In terms of biological role, this protein is located at the 30S-50S ribosomal subunit interface and may play a role in the structure and function of the aminoacyl-tRNA binding site. The sequence is that of Large ribosomal subunit protein bL19 from Streptococcus pyogenes serotype M2 (strain MGAS10270).